Here is a 9159-residue protein sequence, read N- to C-terminus: Halomucin (9159 aa).

Residues 1–30 (MSQTAKPIFAVVVALIVLISGVAFIGSVSA) form the signal peptide. C-type lectin domains lie at 644 to 776 (TTGN…YLVE) and 929 to 1060 (YDGH…VEYG). Positions 1310–1332 (QPQTVNDPDAVSTRNNNVGSNGL) are enriched in polar residues. The segment at 1310–1351 (QPQTVNDPDAVSTRNNNVGSNGLDSKIEDDQNNGADGNPHGT) is disordered. Positions 1756–3380 (VGGLIGESSG…GFNGEHVGGL (1625 aa)) are V-G-G-L motif-rich region. Disordered stretches follow at residues 3484–3514 (GATAQSDATGSGTPGGATGYGSVGDTTPAPQ), 4878–4912 (ESYWDKGATDKSDATGSDTPATVSGYGSVGDTTPA), 6570–6589 (TDSATGSSVGGLIGSQSSGQ), 7047–7097 (TPTV…GINT), 7660–7702 (ATDS…NPGG), 7888–7923 (IDGDGLADDNEATGVPTDNDDDNDGIPDDEDQEPAL), 8212–8237 (STQQKRVGPLVSEDPSTVSWPSGAAD), and 8369–8614 (DSTA…GSST). Positions 3495–3505 (GTPGGATGYGS) are enriched in gly residues. The segment covering 4880 to 4890 (YWDKGATDKSD) has biased composition (basic and acidic residues). Polar residues-rich tracts occupy residues 7048-7057 (PTVTINSSSD) and 7068-7078 (GEDSTSSNESS). Residues 7079-7092 (DGTESDQGDPEDDI) show a composition bias toward acidic residues. Residues 7681-7698 (VTGSTPTFVSSGTVTTPE) show a composition bias toward polar residues. Residues 7686 to 7793 (PTFVSSGTVT…ITDVDEQPTG (108 aa)) enclose the Cadherin domain. Acidic residues-rich tracts occupy residues 7888 to 7898 (IDGDGLADDNE) and 7905 to 7920 (DNDDDNDGIPDDEDQE). Residues 8378-8390 (ALEDDSSNQDSGD) show a composition bias toward acidic residues. Low complexity-rich tracts occupy residues 8391 to 8529 (DSSN…SSQN) and 8538 to 8548 (SAAAVGAESGS). 2 stretches are compositionally biased toward gly residues: residues 8549–8566 (EMGGETGGESQAGGGDGS) and 8574–8608 (AGGGSSGGSSSGDSGGSSSGNSGGSSSGNSGGSSS).

Post-translationally, probably glycosylated with sugar containing sialic acid. This may further contribute to its overall negative charge, thereby creating an aqueous shield covering the cells.

It localises to the secreted. In terms of biological role, may protect the organism from desiccation stress. May also contribute to the rigidity and maintenance of the unique square cell morphology of H.walsbyi. The sequence is that of Halomucin (hmu) from Haloquadratum walsbyi (strain DSM 16790 / HBSQ001).